The following is a 152-amino-acid chain: Aspartate carbamoyltransferase regulatory chain (152 aa).

Residues Cys109, Cys114, Cys138, and Cys141 each contribute to the Zn(2+) site.

It belongs to the PyrI family. As to quaternary structure, contains catalytic and regulatory chains. It depends on Zn(2+) as a cofactor.

Involved in allosteric regulation of aspartate carbamoyltransferase. The chain is Aspartate carbamoyltransferase regulatory chain from Thermoplasma volcanium (strain ATCC 51530 / DSM 4299 / JCM 9571 / NBRC 15438 / GSS1).